The primary structure comprises 147 residues: MLIPKENRKAIHQALFQQGVLVAKKDFNLPKHPEVGVPNLQVIKACQSLDSRGYLKTRYNWGWFYYTLTNEGVEYLREYLHLPAEVVPATHKRQVRPAAPRAGRPEPRERSSAADAGYRRAEKKDDGAAPGGFAPSFRGGFGRPVAA.

Residues 90–147 form a disordered region; the sequence is THKRQVRPAAPRAGRPEPRERSSAADAGYRRAEKKDDGAAPGGFAPSFRGGFGRPVAA. The segment covering 103–127 has biased composition (basic and acidic residues); the sequence is GRPEPRERSSAADAGYRRAEKKDDG.

It belongs to the eukaryotic ribosomal protein eS10 family. As to quaternary structure, component of the small ribosomal subunit (SSU). Mature yeast ribosomes consist of a small (40S) and a large (60S) subunit. The 40S small subunit contains 1 molecule of ribosomal RNA (18S rRNA) and at least 33 different proteins. The large 60S subunit contains 3 rRNA molecules (25S, 5.8S and 5S rRNA) and at least 46 different proteins. eS10 interacts with GCN1 (via middle region); this interaction is direct and promotes GCN2 kinase activity.

The protein resides in the cytoplasm. Component of the ribosome, a large ribonucleoprotein complex responsible for the synthesis of proteins in the cell. The small ribosomal subunit (SSU) binds messenger RNAs (mRNAs) and translates the encoded message by selecting cognate aminoacyl-transfer RNA (tRNA) molecules. The large subunit (LSU) contains the ribosomal catalytic site termed the peptidyl transferase center (PTC), which catalyzes the formation of peptide bonds, thereby polymerizing the amino acids delivered by tRNAs into a polypeptide chain. The nascent polypeptides leave the ribosome through a tunnel in the LSU and interact with protein factors that function in enzymatic processing, targeting, and the membrane insertion of nascent chains at the exit of the ribosomal tunnel. eS10 plays a role as a positive regulator of the GCN2 kinase activity by stimulating GCN1-mediated GCN2 activation. This Schizosaccharomyces pombe (strain 972 / ATCC 24843) (Fission yeast) protein is Small ribosomal subunit protein eS10B (rps1002).